Here is a 148-residue protein sequence, read N- to C-terminus: Large ribosomal subunit protein uL15 (148 aa).

Residues G18–L38 form a disordered region.

Belongs to the universal ribosomal protein uL15 family.

The protein is Large ribosomal subunit protein uL15 (rpl27a) of Dictyostelium discoideum (Social amoeba).